Reading from the N-terminus, the 170-residue chain is Small ribosomal subunit protein mS25 (170 aa).

Belongs to the mitochondrion-specific ribosomal protein mS25 family. As to quaternary structure, component of the mitochondrial ribosome small subunit (28S) which comprises a 12S rRNA and about 30 distinct proteins.

It localises to the mitochondrion. The sequence is that of Small ribosomal subunit protein mS25 (mrps-25) from Caenorhabditis elegans.